We begin with the raw amino-acid sequence, 514 residues long: MEKLYESMYQLIVETSTKLPKDVRRAILKAKQRENAGTRAAMSLATITENIKMADENVSPICQDTGLPTFKIKVPVGINQIQIKETIKKAIAQATKDGKLRPNSVDSLTGENSGDNLGEGLPVVKFEQWEKDYMDVRLILKGGGCENKNIQYSLPCELEGLGRAGRDLDGIRKCILHAVYQAQGQGCSAGFIGVGIGGDRSAGYDLAKEQLFREVDDVNPNEELRQLEEYIMENANKLGIGTMGFGGETTLLGCKVGAMHRIPASFFVSVAYNCWAFRRLGVHIDPNTGEIIKWLYQDGEDVDFQENAAQEEHLASTDSERRVITLQAPITEEQIRELKVGDVVRINGIIYTGRDAIHKYLMDHDAPVDLNGQIIYHCGPVMLKDENGNWEVKAAGPTTSIREEPYQGDIMKKFGIRAVMGKGGMGQKTLQALKEHGGVYLNAIGGAAQYYADCIEAVEGVDLLEFGIPEAMWHLRVKDFTAVVTMDSHGNSLHEDIEKSSLEKLSQFKEPVFS.

[4Fe-4S] cluster contacts are provided by Cys-62, Cys-187, and Cys-274.

This sequence belongs to the class-I fumarase family. As to quaternary structure, homodimer. [4Fe-4S] cluster is required as a cofactor.

It carries out the reaction (S)-malate = fumarate + H2O. It functions in the pathway carbohydrate metabolism; tricarboxylic acid cycle; (S)-malate from fumarate: step 1/1. In terms of biological role, catalyzes the reversible hydration of fumarate to (S)-malate. This is Putative fumarate hydratase class I (fumA) from Geobacillus stearothermophilus (Bacillus stearothermophilus).